The following is a 514-amino-acid chain: Probable outer membrane protein pmp12 (514 aa).

The N-terminal stretch at 1 to 21 (MTILRNFLTCSALFLALPAAA) is a signal peptide.

This sequence belongs to the PMP outer membrane protein family.

Its subcellular location is the secreted. The protein localises to the cell wall. It localises to the cell outer membrane. This is Probable outer membrane protein pmp12 (pmp12) from Chlamydia pneumoniae (Chlamydophila pneumoniae).